Consider the following 418-residue polypeptide: Gamma-glutamyl phosphate reductase (418 aa).

It belongs to the gamma-glutamyl phosphate reductase family.

The protein resides in the cytoplasm. The catalysed reaction is L-glutamate 5-semialdehyde + phosphate + NADP(+) = L-glutamyl 5-phosphate + NADPH + H(+). The protein operates within amino-acid biosynthesis; L-proline biosynthesis; L-glutamate 5-semialdehyde from L-glutamate: step 2/2. In terms of biological role, catalyzes the NADPH-dependent reduction of L-glutamate 5-phosphate into L-glutamate 5-semialdehyde and phosphate. The product spontaneously undergoes cyclization to form 1-pyrroline-5-carboxylate. The protein is Gamma-glutamyl phosphate reductase of Clostridium acetobutylicum (strain ATCC 824 / DSM 792 / JCM 1419 / IAM 19013 / LMG 5710 / NBRC 13948 / NRRL B-527 / VKM B-1787 / 2291 / W).